A 124-amino-acid polypeptide reads, in one-letter code: Urotensin-2 (124 aa).

An N-terminal signal peptide occupies residues 1 to 20; it reads MYKLASCCLLFIGFLNPLLS. A propeptide spanning residues 21–110 is cleaved from the precursor; the sequence is LPLLDSREIS…HLLARIWKPY (90 aa). C118 and C123 are oxidised to a cystine.

Belongs to the urotensin-2 family. In terms of tissue distribution, brain specific.

The protein resides in the secreted. Its function is as follows. Highly potent vasoconstrictor. This is Urotensin-2 (UTS2) from Homo sapiens (Human).